The sequence spans 180 residues: Ferric nitrobindin-like protein (180 aa).

A GXWXGXG motif is present at residues 21–27; that stretch reads GRWEGAG.

This sequence belongs to the nitrobindin family.

In Kineococcus radiotolerans (strain ATCC BAA-149 / DSM 14245 / SRS30216), this protein is Ferric nitrobindin-like protein.